The chain runs to 336 residues: Tryptophan--tRNA ligase (336 aa).

ATP contacts are provided by residues 15-17 (QPT) and 24-25 (GN). The short motif at 16–25 (PTSDSLHLGN) is the 'HIGH' region element. L-tryptophan is bound at residue D141. Residues 153-155 (GED), I192, and 201-205 (KMSKS) each bind ATP. The 'KMSKS' region signature appears at 201-205 (KMSKS).

Belongs to the class-I aminoacyl-tRNA synthetase family. Homodimer.

The protein resides in the cytoplasm. It catalyses the reaction tRNA(Trp) + L-tryptophan + ATP = L-tryptophyl-tRNA(Trp) + AMP + diphosphate + H(+). Functionally, catalyzes the attachment of tryptophan to tRNA(Trp). The polypeptide is Tryptophan--tRNA ligase (Mycobacterium tuberculosis (strain CDC 1551 / Oshkosh)).